A 293-amino-acid chain; its full sequence is Formamidopyrimidine-DNA glycosylase (293 aa).

The active-site Schiff-base intermediate with DNA is P2. The Proton donor role is filled by E3. K58 functions as the Proton donor; for beta-elimination activity in the catalytic mechanism. The DNA site is built by H104, R123, and K166. The segment at 257–293 (KVYDREGETCKTPACGGTIKRFTQNGRSTFWCPKCQK) adopts an FPG-type zinc-finger fold. The active-site Proton donor; for delta-elimination activity is R283.

The protein belongs to the FPG family. Monomer. Requires Zn(2+) as cofactor.

The catalysed reaction is Hydrolysis of DNA containing ring-opened 7-methylguanine residues, releasing 2,6-diamino-4-hydroxy-5-(N-methyl)formamidopyrimidine.. It catalyses the reaction 2'-deoxyribonucleotide-(2'-deoxyribose 5'-phosphate)-2'-deoxyribonucleotide-DNA = a 3'-end 2'-deoxyribonucleotide-(2,3-dehydro-2,3-deoxyribose 5'-phosphate)-DNA + a 5'-end 5'-phospho-2'-deoxyribonucleoside-DNA + H(+). Involved in base excision repair of DNA damaged by oxidation or by mutagenic agents. Acts as a DNA glycosylase that recognizes and removes damaged bases. Has a preference for oxidized purines, such as 7,8-dihydro-8-oxoguanine (8-oxoG). Has AP (apurinic/apyrimidinic) lyase activity and introduces nicks in the DNA strand. Cleaves the DNA backbone by beta-delta elimination to generate a single-strand break at the site of the removed base with both 3'- and 5'-phosphates. The polypeptide is Formamidopyrimidine-DNA glycosylase (Bradyrhizobium diazoefficiens (strain JCM 10833 / BCRC 13528 / IAM 13628 / NBRC 14792 / USDA 110)).